A 169-amino-acid polypeptide reads, in one-letter code: Putative hydrogenase maturation protease MJ0631 (169 aa).

The protein belongs to the peptidase A31 family.

This chain is Putative hydrogenase maturation protease MJ0631, found in Methanocaldococcus jannaschii (strain ATCC 43067 / DSM 2661 / JAL-1 / JCM 10045 / NBRC 100440) (Methanococcus jannaschii).